Reading from the N-terminus, the 158-residue chain is Molybdopterin synthase catalytic subunit (158 aa).

Residues 107 to 108 (HR), lysine 123, and 130 to 132 (KKE) contribute to the substrate site.

It belongs to the MoaE family. MOCS2B subfamily. Heterotetramer; composed of 2 small (mocs2s) and 2 large (mocs2l) subunits.

It is found in the cytoplasm. It catalyses the reaction 2 [molybdopterin-synthase sulfur-carrier protein]-C-terminal-Gly-aminoethanethioate + cyclic pyranopterin phosphate + H2O = molybdopterin + 2 [molybdopterin-synthase sulfur-carrier protein]-C-terminal Gly-Gly + 2 H(+). It participates in cofactor biosynthesis; molybdopterin biosynthesis. Catalytic subunit of the molybdopterin synthase complex, a complex that catalyzes the conversion of precursor Z into molybdopterin. Acts by mediating the incorporation of 2 sulfur atoms from thiocarboxylated mocs2s into precursor Z to generate a dithiolene group. The sequence is that of Molybdopterin synthase catalytic subunit (mocs2l) from Dictyostelium discoideum (Social amoeba).